A 137-amino-acid chain; its full sequence is uncharacterized protein (137 aa).

A helical transmembrane segment spans residues 116–136 (YLSIANLATLLLFGIIGLSII).

It is found in the host membrane. This is an uncharacterized protein from His1 virus (isolate Australia/Victoria) (His1V).